A 589-amino-acid polypeptide reads, in one-letter code: MEEKVSLKVRVQKLGTSLSNMVMPNIGAFIAWGVLTALFIADGYLPNEQLATVVGPMLTYLLPILIGYTGGYMIHGQRGAVVGAIATVGAITGSSVPMFIGAMVMGPLGGWTIKKFDEKFQEKIRPGFEMLVNNFSAGLVGFALLLLAFYAIGPVVSTLTGAVGNGVEAIVNARLLPMANIIIEPAKVLFLNNALNHGIFTPLGVEQVAQAGKSILFLLEANPGPGLGILLAYAVFGKGSAKSSSWGAMVIHFFGGIHEIYFPYVMMKPTLFLAAMAGGISGTFTFQLLDAGLKSPASPGSIIAIIATAPKGVWPHLNVLLGVLVAAVVSFLVAALILHADKSTEDSLEAAQAATQAAKAQSKGQLVSTSVDAVVSTDSVEKIIFACDAGMGSSAMGASILRDKVKKAGLEIPVSNQAISNLLDTPKTLIVTQEELTPRAKDKSPSAIHVSVDNFLASSRYDEIVASLTGASPIAEIEGDIPTSAPVDSQESDLNHIDAVVVAYGKAQGTATMGCETIRAIFRNKNIRIPVSTAKISELGEFNSKNIMIVTTISLQAEVQQAAPNSQFLIVDSLVTTPEYDKMAARMYK.

Residues 1 to 25 are Cytoplasmic-facing; that stretch reads MEEKVSLKVRVQKLGTSLSNMVMPN. Residues 14–347 form the PTS EIIC type-2 domain; that stretch reads LGTSLSNMVM…LHADKSTEDS (334 aa). The helical transmembrane segment at 26–47 threads the bilayer; it reads IGAFIAWGVLTALFIADGYLPN. The Extracellular segment spans residues 48–51; the sequence is EQLA. A helical membrane pass occupies residues 52–72; it reads TVVGPMLTYLLPILIGYTGGY. Residues 73-135 lie on the Cytoplasmic side of the membrane; sequence MIHGQRGAVV…PGFEMLVNNF (63 aa). The chain crosses the membrane as a helical span at residues 136–157; the sequence is SAGLVGFALLLLAFYAIGPVVS. The Extracellular segment spans residues 158 to 166; sequence TLTGAVGNG. Residues 167–187 traverse the membrane as a helical segment; it reads VEAIVNARLLPMANIIIEPAK. At 188–274 the chain is on the cytoplasmic side; that stretch reads VLFLNNALNH…VMMKPTLFLA (87 aa). A helical transmembrane segment spans residues 275-294; it reads AMAGGISGTFTFQLLDAGLK. The Extracellular portion of the chain corresponds to 295–316; the sequence is SPASPGSIIAIIATAPKGVWPH. Residues 317 to 338 form a helical membrane-spanning segment; sequence LNVLLGVLVAAVVSFLVAALIL. Topologically, residues 339-589 are cytoplasmic; that stretch reads HADKSTEDSL…YDKMAARMYK (251 aa). Residues 381 to 476 enclose the PTS EIIB type-2 domain; the sequence is EKIIFACDAG…SLTGASPIAE (96 aa). Catalysis depends on Cys-387, which acts as the Phosphocysteine intermediate; for EIIB activity. Residue Cys-387 is modified to Phosphocysteine; by EIIA.

As to quaternary structure, homodimer.

The protein localises to the cell membrane. The catalysed reaction is D-mannitol(out) + N(pros)-phospho-L-histidyl-[protein] = D-mannitol 1-phosphate(in) + L-histidyl-[protein]. In terms of biological role, the phosphoenolpyruvate-dependent sugar phosphotransferase system (sugar PTS), a major carbohydrate active transport system, catalyzes the phosphorylation of incoming sugar substrates concomitantly with their translocation across the cell membrane. The enzyme II CmtAB PTS system is involved in D-mannitol transport. The sequence is that of PTS system mannitol-specific EIICB component (mtlA) from Streptococcus pneumoniae serotype 4 (strain ATCC BAA-334 / TIGR4).